The following is a 437-amino-acid chain: Chromosomal replication initiator protein DnaA (437 aa).

A domain I, interacts with DnaA modulators region spans residues 1–74; that stretch reads MNLAWNKILE…EACGDKIPVE (74 aa). Positions 74–98 are domain II; that stretch reads EILIETKATSPLQSFLEKSFDQKDF. The segment at 99–315 is domain III, AAA+ region; that stretch reads QFNPDYTFET…GALNDIYLYK (217 aa). The ATP site is built by G142, G144, K145, and T146. The segment at 316–437 is domain IV, binds dsDNA; it reads KSYSLLFLNL…ERISSKYKLQ (122 aa).

Belongs to the DnaA family. In terms of assembly, oligomerizes as a right-handed, spiral filament on DNA at oriC.

Its subcellular location is the cytoplasm. Its function is as follows. Plays an essential role in the initiation and regulation of chromosomal replication. ATP-DnaA binds to the origin of replication (oriC) to initiate formation of the DNA replication initiation complex once per cell cycle. Binds the DnaA box (a 9 base pair repeat at the origin) and separates the double-stranded (ds)DNA. Forms a right-handed helical filament on oriC DNA; dsDNA binds to the exterior of the filament while single-stranded (ss)DNA is stabiized in the filament's interior. The ATP-DnaA-oriC complex binds and stabilizes one strand of the AT-rich DNA unwinding element (DUE), permitting loading of DNA polymerase. After initiation quickly degrades to an ADP-DnaA complex that is not apt for DNA replication. Binds acidic phospholipids. This chain is Chromosomal replication initiator protein DnaA, found in Leptospira borgpetersenii serovar Hardjo-bovis (strain JB197).